We begin with the raw amino-acid sequence, 195 residues long: GTP cyclohydrolase 1 (195 aa).

Zn(2+) is bound by residues Cys86, His89, and Cys158.

Belongs to the GTP cyclohydrolase I family. In terms of assembly, homomer.

The catalysed reaction is GTP + H2O = 7,8-dihydroneopterin 3'-triphosphate + formate + H(+). Its pathway is cofactor biosynthesis; 7,8-dihydroneopterin triphosphate biosynthesis; 7,8-dihydroneopterin triphosphate from GTP: step 1/1. The polypeptide is GTP cyclohydrolase 1 (Ruminiclostridium cellulolyticum (strain ATCC 35319 / DSM 5812 / JCM 6584 / H10) (Clostridium cellulolyticum)).